We begin with the raw amino-acid sequence, 116 residues long: Small ribosomal subunit protein uS13 (116 aa).

The tract at residues 88–116 is disordered; it reads GSRHKKGLPVRGQHTKNNARTRKGPRKQA.

This sequence belongs to the universal ribosomal protein uS13 family. As to quaternary structure, part of the 30S ribosomal subunit. Forms a loose heterodimer with protein S19. Forms two bridges to the 50S subunit in the 70S ribosome.

Functionally, located at the top of the head of the 30S subunit, it contacts several helices of the 16S rRNA. In the 70S ribosome it contacts the 23S rRNA (bridge B1a) and protein L5 of the 50S subunit (bridge B1b), connecting the 2 subunits; these bridges are implicated in subunit movement. Contacts the tRNAs in the A and P-sites. In Finegoldia magna (strain ATCC 29328 / DSM 20472 / WAL 2508) (Peptostreptococcus magnus), this protein is Small ribosomal subunit protein uS13.